Here is a 421-residue protein sequence, read N- to C-terminus: GTPase Obg (421 aa).

The 158-residue stretch at 4–161 (LHFIDEAFNE…FKIKIQLKVL (158 aa)) folds into the Obg domain. In terms of domain architecture, OBG-type G spans 162-327 (ADVGLLGFPS…LKYAIKNLLQ (166 aa)). GTP contacts are provided by residues 168–175 (GFPSVGKS), 193–197 (FTTLF), 214–217 (DLPG), 281–284 (NKMD), and 308–310 (SLI). The Mg(2+) site is built by Ser-175 and Thr-195. Residues 343-421 (DLNSETQTFT…ICNYLFDFVI (79 aa)) form the OCT domain.

It belongs to the TRAFAC class OBG-HflX-like GTPase superfamily. OBG GTPase family. Monomer. Mg(2+) serves as cofactor.

The protein resides in the cytoplasm. An essential GTPase which binds GTP, GDP and possibly (p)ppGpp with moderate affinity, with high nucleotide exchange rates and a fairly low GTP hydrolysis rate. Plays a role in control of the cell cycle, stress response, ribosome biogenesis and in those bacteria that undergo differentiation, in morphogenesis control. In Phytoplasma australiense, this protein is GTPase Obg.